We begin with the raw amino-acid sequence, 132 residues long: Small ribosomal subunit protein uS8c (132 aa).

This sequence belongs to the universal ribosomal protein uS8 family. Part of the 30S ribosomal subunit.

It localises to the plastid. The protein resides in the chloroplast. One of the primary rRNA binding proteins, it binds directly to 16S rRNA central domain where it helps coordinate assembly of the platform of the 30S subunit. The polypeptide is Small ribosomal subunit protein uS8c (rps8) (Pinus thunbergii (Japanese black pine)).